A 72-amino-acid polypeptide reads, in one-letter code: UPF0150 protein ssl0738 (72 aa).

Belongs to the UPF0150 family.

In Synechocystis sp. (strain ATCC 27184 / PCC 6803 / Kazusa), this protein is UPF0150 protein ssl0738.